A 577-amino-acid polypeptide reads, in one-letter code: ABC transporter G family member 4 (577 aa).

Residues 6–248 enclose the ABC transporter domain; it reads LSTSSISYAK…LLSKGFTVPS (243 aa). ATP is bound at residue 48-55; the sequence is GPSGAGKS. The ABC transmembrane type-2 domain maps to 299–509; the sequence is TEISLLSSRF…ALDALLINEY (211 aa). 7 helical membrane passes run 318-338, 353-373, 400-420, 429-449, 458-478, 487-507, and 548-568; these read LLLTNILESLVVGLVLGTIYL, LFAFTLTFLLSSTTQTLPIFI, VFLPYLLLIAIIYSVSLYFLV, LAYFVLVIWIIVLMANSFVLF, IAGTSSVTILLAAFFLFSGYF, YWLFMYFFSMYKYALDALLIN, and FNVYMLLGFFVLYRVLCFLVL.

This sequence belongs to the ABC transporter superfamily. ABCG family. Eye pigment precursor importer (TC 3.A.1.204) subfamily.

The protein resides in the membrane. This is ABC transporter G family member 4 (ABCG4) from Arabidopsis thaliana (Mouse-ear cress).